Here is a 225-residue protein sequence, read N- to C-terminus: MNPVYSPGSSGVPYANAKGIGYPAGFPMGYAAAAPAYSPNMYAGPNPAFQQELEHPAHVSSGVQMFMFGHAFSVARNGAIPSGYTPGTPYKVSCSPTSGTVPPYSSSPNPYQTAVYPVRSAYPQQNPYAQQGAYYTQPFYAAPPHVIHHTTVVQPNGMPATMYPAPIQSPRGNGVAMGMVAGTTMAMSAGTLLTSHYPSPVAPQVTMPTYRPPGTPTYSYVPPQW.

Topologically, residues 1–58 (MNPVYSPGSSGVPYANAKGIGYPAGFPMGYAAAAPAYSPNMYAGPNPAFQQELEHPAH) are cytoplasmic. A helical membrane pass occupies residues 59–75 (VSSGVQMFMFGHAFSVA). The Extracellular portion of the chain corresponds to 76-173 (RNGAIPSGYT…PAPIQSPRGN (98 aa)). The helical transmembrane segment at 174–193 (GVAMGMVAGTTMAMSAGTLL) threads the bilayer. Residues 194–225 (TSHYPSPVAPQVTMPTYRPPGTPTYSYVPPQW) lie on the Cytoplasmic side of the membrane.

Belongs to the FAM168 family.

The protein localises to the cytoplasm. Its subcellular location is the perinuclear region. It localises to the cell membrane. The protein resides in the cell projection. It is found in the axon. In terms of biological role, inhibitor of neuronal axonal outgrowth. This Xenopus laevis (African clawed frog) protein is Myelin-associated neurite-outgrowth inhibitor (fam168b).